Reading from the N-terminus, the 356-residue chain is Tyrosine recombinase XerS (356 aa).

Residues 16–121 (IMPWYVLDYY…ALSSLYKYLT (106 aa)) enclose the Core-binding (CB) domain. The 186-residue stretch at 169-354 (AFLDYVDKEY…VNDEQKNALD (186 aa)) folds into the Tyr recombinase domain. Catalysis depends on residues Arg210, Lys234, His306, Arg309, and His332. The O-(3'-phospho-DNA)-tyrosine intermediate role is filled by Tyr341.

This sequence belongs to the 'phage' integrase family. XerS subfamily.

The protein resides in the cytoplasm. With respect to regulation, ftsK is required for recombination. Site-specific tyrosine recombinase, which acts by catalyzing the cutting and rejoining of the recombining DNA molecules. Essential to convert dimers of the bacterial chromosome into monomers to permit their segregation at cell division. In Streptococcus pyogenes serotype M18 (strain MGAS8232), this protein is Tyrosine recombinase XerS.